A 151-amino-acid polypeptide reads, in one-letter code: Transcriptional regulator MraZ (151 aa).

SpoVT-AbrB domains lie at 5 to 52 (ANAV…PLDE) and 81 to 124 (AVDL…DEDA).

Belongs to the MraZ family. As to quaternary structure, forms oligomers.

The protein localises to the cytoplasm. Its subcellular location is the nucleoid. The sequence is that of Transcriptional regulator MraZ from Pseudomonas putida (strain W619).